A 138-amino-acid polypeptide reads, in one-letter code: Small ribosomal subunit protein uS17 (138 aa).

Composition is skewed to basic and acidic residues over residues Met1 to Ala18 and Ala43 to Thr55. Residues Met1 to Glu62 form a disordered region.

This sequence belongs to the universal ribosomal protein uS17 family. In terms of assembly, part of the 30S ribosomal subunit.

Functionally, one of the primary rRNA binding proteins, it binds specifically to the 5'-end of 16S ribosomal RNA. The sequence is that of Small ribosomal subunit protein uS17 from Rubrobacter xylanophilus (strain DSM 9941 / JCM 11954 / NBRC 16129 / PRD-1).